The following is a 681-amino-acid chain: Nucleolar GTP-binding protein 1 (681 aa).

The 172-residue stretch at 170–341 (RTLILCGFPN…LRDRACDELL (172 aa)) folds into the OBG-type G domain. GTP is bound by residues 176–183 (GFPNVGKS), 222–226 (DTPGI), and 290–293 (NKVD).

The protein belongs to the TRAFAC class OBG-HflX-like GTPase superfamily. OBG GTPase family. NOG subfamily. In terms of tissue distribution, ubiquitously expressed.

Its subcellular location is the nucleus. The protein localises to the nucleolus. In terms of biological role, involved in the biogenesis of the 60S ribosomal subunit. Has a role in regulating longevity, growth and brood size. May regulate fat storage via the insulin/IGF pathway. This chain is Nucleolar GTP-binding protein 1, found in Caenorhabditis elegans.